Reading from the N-terminus, the 294-residue chain is Nucleotide-binding protein Tfu_2020 (294 aa).

18 to 25 (GMSGAGRS) is an ATP binding site. 69–72 (DVRS) serves as a coordination point for GTP.

Belongs to the RapZ-like family.

Displays ATPase and GTPase activities. This chain is Nucleotide-binding protein Tfu_2020, found in Thermobifida fusca (strain YX).